We begin with the raw amino-acid sequence, 143 residues long: Endoribonuclease YbeY (143 aa).

Zn(2+)-binding residues include histidine 109, histidine 113, and histidine 119.

It belongs to the endoribonuclease YbeY family. It depends on Zn(2+) as a cofactor.

It is found in the cytoplasm. In terms of biological role, single strand-specific metallo-endoribonuclease involved in late-stage 70S ribosome quality control and in maturation of the 3' terminus of the 16S rRNA. The polypeptide is Endoribonuclease YbeY (Leptospira borgpetersenii serovar Hardjo-bovis (strain JB197)).